Here is a 357-residue protein sequence, read N- to C-terminus: Fructose-1,6-bisphosphatase class 1 2 (357 aa).

Positions 90, 112, 114, and 115 each coordinate Mg(2+). Substrate-binding positions include aspartate 115 to serine 118 and asparagine 206. Residue glutamate 278 coordinates Mg(2+).

Belongs to the FBPase class 1 family. Homotetramer. The cofactor is Mg(2+).

The protein localises to the cytoplasm. The enzyme catalyses beta-D-fructose 1,6-bisphosphate + H2O = beta-D-fructose 6-phosphate + phosphate. It functions in the pathway carbohydrate biosynthesis; gluconeogenesis. The protein is Fructose-1,6-bisphosphatase class 1 2 of Dechloromonas aromatica (strain RCB).